The sequence spans 77 residues: uncharacterized protein (77 aa).

Residues 54–77 (HHGRKHKEDMEARHEQLTKGGTIL) are disordered. Over residues 59-70 (HKEDMEARHEQL) the composition is skewed to basic and acidic residues.

This is an uncharacterized protein from Escherichia coli O157:H7.